A 336-amino-acid chain; its full sequence is tRNA N6-adenosine threonylcarbamoyltransferase (336 aa).

Residues His-114 and His-118 each contribute to the Fe cation site. Residues 136-140 (LVSGG), Asp-169, Gly-182, Asp-186, and Asn-275 each bind substrate. Fe cation is bound at residue Asp-301.

Belongs to the KAE1 / TsaD family. Requires Fe(2+) as cofactor.

It localises to the cytoplasm. It carries out the reaction L-threonylcarbamoyladenylate + adenosine(37) in tRNA = N(6)-L-threonylcarbamoyladenosine(37) in tRNA + AMP + H(+). In terms of biological role, required for the formation of a threonylcarbamoyl group on adenosine at position 37 (t(6)A37) in tRNAs that read codons beginning with adenine. Is involved in the transfer of the threonylcarbamoyl moiety of threonylcarbamoyl-AMP (TC-AMP) to the N6 group of A37, together with TsaE and TsaB. TsaD likely plays a direct catalytic role in this reaction. In Streptococcus pneumoniae (strain JJA), this protein is tRNA N6-adenosine threonylcarbamoyltransferase.